The primary structure comprises 508 residues: Lysine--tRNA ligase (508 aa).

The Mg(2+) site is built by Glu418 and Glu425.

It belongs to the class-II aminoacyl-tRNA synthetase family. In terms of assembly, homodimer. Mg(2+) serves as cofactor.

The protein resides in the cytoplasm. It carries out the reaction tRNA(Lys) + L-lysine + ATP = L-lysyl-tRNA(Lys) + AMP + diphosphate. This Burkholderia thailandensis (strain ATCC 700388 / DSM 13276 / CCUG 48851 / CIP 106301 / E264) protein is Lysine--tRNA ligase.